A 1666-amino-acid chain; its full sequence is Probable clathrin heavy chain (1666 aa).

7 WD40-like repeat regions span residues 24 to 67, 68 to 107, 108 to 148, 149 to 194, 195 to 255, 256 to 299, and 300 to 328; these read SFGF…RPIS, ADSV…MNQD, VVYW…SSLN, GTQI…QPLE, SHAS…PEAV, NDFP…VSGE, and SIFV…VSIN. T392 carries the post-translational modification Phosphothreonine. S393 is modified (phosphoserine). 7 CHCR repeats span residues 534 to 680, 683 to 825, 830 to 969, 975 to 1120, 1124 to 1265, 1270 to 1415, and 1418 to 1561; these read MFNS…QIVV, ATRY…DEEL, LMSV…LLDQ, VPES…IPDA, YLKA…FRLA, LNLI…MLLT, and LAAL…YECF.

Belongs to the clathrin heavy chain family. In terms of assembly, clathrin triskelions, composed of 3 heavy chains and 3 light chains, are the basic subunits of the clathrin coat.

Its subcellular location is the cytoplasmic vesicle membrane. It localises to the membrane. The protein resides in the coated pit. Functionally, clathrin is the major protein of the polyhedral coat of coated pits and vesicles. The polypeptide is Probable clathrin heavy chain (chc1) (Schizosaccharomyces pombe (strain 972 / ATCC 24843) (Fission yeast)).